A 483-amino-acid chain; its full sequence is Trimethylamine methyltransferase MttB (483 aa).

O334 is a non-standard amino acid (pyrrolysine).

It belongs to the trimethylamine methyltransferase family. As to quaternary structure, can form a complex with MttC.

It carries out the reaction Co(I)-[trimethylamine-specific corrinoid protein] + trimethylamine + H(+) = methyl-Co(III)-[trimethylamine-specific corrinoid protein] + dimethylamine. It functions in the pathway one-carbon metabolism; methanogenesis from trimethylamine. In terms of biological role, catalyzes the transfer of a methyl group from trimethylamine to the corrinoid cofactor of MttC. The polypeptide is Trimethylamine methyltransferase MttB (mttB) (Methanosarcina thermophila).